A 150-amino-acid polypeptide reads, in one-letter code: 6,7-dimethyl-8-ribityllumazine synthase (150 aa).

Residues F11, 43 to 45, and 67 to 69 each bind 5-amino-6-(D-ribitylamino)uracil; these read TYE and AVI. Residue 72–73 participates in (2S)-2-hydroxy-3-oxobutyl phosphate binding; sequence AT. H75 functions as the Proton donor in the catalytic mechanism. Residue L100 participates in 5-amino-6-(D-ribitylamino)uracil binding. (2S)-2-hydroxy-3-oxobutyl phosphate is bound at residue R115.

It belongs to the DMRL synthase family.

The catalysed reaction is (2S)-2-hydroxy-3-oxobutyl phosphate + 5-amino-6-(D-ribitylamino)uracil = 6,7-dimethyl-8-(1-D-ribityl)lumazine + phosphate + 2 H2O + H(+). Its pathway is cofactor biosynthesis; riboflavin biosynthesis; riboflavin from 2-hydroxy-3-oxobutyl phosphate and 5-amino-6-(D-ribitylamino)uracil: step 1/2. Functionally, catalyzes the formation of 6,7-dimethyl-8-ribityllumazine by condensation of 5-amino-6-(D-ribitylamino)uracil with 3,4-dihydroxy-2-butanone 4-phosphate. This is the penultimate step in the biosynthesis of riboflavin. This Staphylothermus marinus (strain ATCC 43588 / DSM 3639 / JCM 9404 / F1) protein is 6,7-dimethyl-8-ribityllumazine synthase.